The sequence spans 1771 residues: Kinase D-interacting substrate of 220 kDa (1771 aa).

Residues methionine 1 to tryptophan 499 lie on the Cytoplasmic side of the membrane. 12 ANK repeats span residues leucine 4–glutamate 33, cysteine 37–leucine 66, aspartate 70–histidine 99, glycine 103–valine 132, tyrosine 136–cysteine 165, tyrosine 169–glutamine 198, asparagine 202–leucine 231, aspartate 235–isoleucine 264, serine 268–isoleucine 297, aspartate 301–isoleucine 330, aspartate 334–alanine 363, and lysine 367–leucine 396. The KAP NTPase domain maps to tyrosine 440–leucine 953. The helical transmembrane segment at leucine 500–valine 520 threads the bilayer. Topologically, residues histidine 521–leucine 524 are extracellular. A helical transmembrane segment spans residues glycine 525 to phenylalanine 545. Residues glycine 546–serine 659 are Cytoplasmic-facing. A helical membrane pass occupies residues phenylalanine 660–phenylalanine 680. At arginine 681–lysine 685 the chain is on the extracellular side. A helical transmembrane segment spans residues histidine 686 to leucine 706. The Cytoplasmic portion of the chain corresponds to asparagine 707–leucine 1771. A phosphoserine mark is found at serine 882 and serine 885. Threonine 914 carries the post-translational modification Phosphothreonine. Residue serine 918 is modified to Phosphoserine. The interval proline 1089–proline 1092 is mediates interaction with CRKL. Serine 1163 is subject to Phosphoserine. 4 disordered regions span residues aspartate 1182 to glycine 1202, proline 1285 to histidine 1310, arginine 1344 to serine 1368, and leucine 1397 to arginine 1564. A phosphoserine mark is found at serine 1296, serine 1352, serine 1359, serine 1361, serine 1362, and serine 1365. Polar residues predominate over residues serine 1346–proline 1358. The span at serine 1359 to serine 1368 shows a compositional bias: low complexity. Positions serine 1403–asparagine 1430 are enriched in polar residues. A compositionally biased stretch (basic and acidic residues) spans leucine 1431–valine 1457. A compositionally biased stretch (polar residues) spans tyrosine 1460–alanine 1470. Residues serine 1521, serine 1526, serine 1555, and serine 1574 each carry the phosphoserine modification. Residues aspartate 1522–aspartate 1532 show a composition bias toward acidic residues. Residues leucine 1537–glutamate 1561 are compositionally biased toward basic and acidic residues. A disordered region spans residues leucine 1578–serine 1633. Positions aspartate 1585–serine 1594 are enriched in low complexity. 2 positions are modified to phosphoserine: serine 1623 and serine 1633. Threonine 1679 is subject to Phosphothreonine. Serine 1681 is subject to Phosphoserine. Threonine 1684 is modified (phosphothreonine). Over residues leucine 1713–serine 1731 the composition is skewed to polar residues. The segment at leucine 1713–leucine 1771 is disordered. A PDZ-binding motif is present at residues glutamate 1766–leucine 1771.

In terms of assembly, found in a complex, at least composed of KIDINS220, MAGI2, NTRK1 and RAPGEF2; the complex is mainly formed at late endosomes in a nerve growth factor (NGF)-dependent manner. Interacts with RAPGEF2; the interaction is strengthened after NGF stimulation. Isoform 2 interacts (via C-terminal domain) with MAGI2 isoform 1 (via PDZ domain). Interacts with NTRK1, NTRK2, NTRK3, ERKL and NGFR. Can form a ternary complex with NGFR and NTRK1 and this complex is affected by the expression levels of KIDINS220/ARMS. An increase in KIDINS220/ARMS expression leads to a decreased association of NGFR and NTRK1. Interacts (via PDZ-binding motif) with SNTA1 and SNTB2 (via PDZ domains). Interacts with EPHA4 and PRKD1. Tyrosine phosphorylated by NTRK1, NTRK2, EPHB2 and EPHA4. Phosphorylation at Ser-918 is induced by phorbol ester treatment. Phosphorylation by NTRK2 is induced by brain-derived neurotrophic factor (BDNF) and neurotrophin-4/5. Phosphorylation by NTRK1 is induced by nerve growth factor (NGF). As to expression, abundant in developing and adult neural tissues as well as neuroendocrine cells and dendritic cells. Overexpressed in melanoma and melanoma cell lines.

Its subcellular location is the membrane. It is found in the late endosome. Functionally, promotes a prolonged MAP-kinase signaling by neurotrophins through activation of a Rap1-dependent mechanism. Provides a docking site for the CRKL-C3G complex, resulting in Rap1-dependent sustained ERK activation. May play an important role in regulating postsynaptic signal transduction through the syntrophin-mediated localization of receptor tyrosine kinases such as EPHA4. In cooperation with SNTA1 can enhance EPHA4-induced JAK/STAT activation. Plays a role in nerve growth factor (NGF)-induced recruitment of RAPGEF2 to late endosomes and neurite outgrowth. May play a role in neurotrophin- and ephrin-mediated neuronal outgrowth and in axon guidance during neural development and in neuronal regeneration. Modulates stress-induced apoptosis of melanoma cells via regulation of the MEK/ERK signaling pathway. This chain is Kinase D-interacting substrate of 220 kDa (KIDINS220), found in Homo sapiens (Human).